Consider the following 161-residue polypeptide: Large-conductance mechanosensitive channel (161 aa).

Transmembrane regions (helical) follow at residues 14–34 (VVDMAVGIIVGGAFGSIVNTL) and 85–105 (GLFLNALVSFTIMAFSVFILV).

This sequence belongs to the MscL family. In terms of assembly, homopentamer.

The protein localises to the cell inner membrane. Functionally, channel that opens in response to stretch forces in the membrane lipid bilayer. May participate in the regulation of osmotic pressure changes within the cell. In Chlorobium luteolum (strain DSM 273 / BCRC 81028 / 2530) (Pelodictyon luteolum), this protein is Large-conductance mechanosensitive channel.